A 265-amino-acid chain; its full sequence is Silencing boundary-establishment protein FUB1-like protein (265 aa).

The disordered stretch occupies residues H194 to M265.

It belongs to the proteasome inhibitor PI31 family. In terms of assembly, interacts with the 20S proteasome.

It localises to the cytoplasm. The protein localises to the nucleus. May play a role in the establishment of transcriptional silencing boundaries, preventing the propagation of heterochromatic silencing. This Schizosaccharomyces pombe (strain 972 / ATCC 24843) (Fission yeast) protein is Silencing boundary-establishment protein FUB1-like protein.